The primary structure comprises 69 residues: MAIARGDFVRIKRPESYWYNEIGKVASIDKTGIKYNCTVRFDKCNYAGISGTAEGATTNMFAESELEKA.

This sequence belongs to the PsaE family.

Its subcellular location is the cellular thylakoid membrane. In terms of biological role, stabilizes the interaction between PsaC and the PSI core, assists the docking of the ferredoxin to PSI and interacts with ferredoxin-NADP oxidoreductase. In Prochlorococcus marinus (strain MIT 9215), this protein is Photosystem I reaction center subunit IV.